Consider the following 468-residue polypeptide: Ribulose bisphosphate carboxylase large chain (468 aa).

Lys-5 is modified (N6,N6,N6-trimethyllysine). Substrate-binding residues include Asn-114 and Thr-164. Residue Lys-166 is the Proton acceptor of the active site. Lys-168 provides a ligand contact to substrate. Positions 192, 194, and 195 each coordinate Mg(2+). Lys-192 is modified (N6-carboxylysine). The active-site Proton acceptor is the His-285. Substrate is bound by residues Arg-286, His-318, and Ser-370.

This sequence belongs to the RuBisCO large chain family. Type I subfamily. Heterohexadecamer of 8 large chains and 8 small chains; disulfide-linked. The disulfide link is formed within the large subunit homodimers. It depends on Mg(2+) as a cofactor. In terms of processing, the disulfide bond which can form in the large chain dimeric partners within the hexadecamer appears to be associated with oxidative stress and protein turnover.

It localises to the plastid. The protein resides in the chloroplast. It carries out the reaction 2 (2R)-3-phosphoglycerate + 2 H(+) = D-ribulose 1,5-bisphosphate + CO2 + H2O. It catalyses the reaction D-ribulose 1,5-bisphosphate + O2 = 2-phosphoglycolate + (2R)-3-phosphoglycerate + 2 H(+). Its function is as follows. RuBisCO catalyzes two reactions: the carboxylation of D-ribulose 1,5-bisphosphate, the primary event in carbon dioxide fixation, as well as the oxidative fragmentation of the pentose substrate in the photorespiration process. Both reactions occur simultaneously and in competition at the same active site. This Anthocercis viscosa (Sticky tailflower) protein is Ribulose bisphosphate carboxylase large chain.